We begin with the raw amino-acid sequence, 167 residues long: Cell number regulator 3 (167 aa).

Residues Gly-67–Leu-84 form a helical membrane-spanning segment.

Belongs to the cornifelin family. Expressed only in pollen.

It localises to the membrane. The polypeptide is Cell number regulator 3 (CNR3) (Zea mays (Maize)).